A 342-amino-acid chain; its full sequence is Alanine racemase (342 aa).

Catalysis depends on Lys33, which acts as the Proton acceptor; specific for D-alanine. Residue Lys33 is modified to N6-(pyridoxal phosphate)lysine. Arg128 is a substrate binding site. Tyr240 acts as the Proton acceptor; specific for L-alanine in catalysis. Position 288 (Met288) interacts with substrate.

It belongs to the alanine racemase family. Pyridoxal 5'-phosphate is required as a cofactor.

It carries out the reaction L-alanine = D-alanine. It participates in amino-acid biosynthesis; D-alanine biosynthesis; D-alanine from L-alanine: step 1/1. Its function is as follows. Catalyzes the interconversion of L-alanine and D-alanine. May also act on other amino acids. The polypeptide is Alanine racemase (alr) (Jannaschia sp. (strain CCS1)).